Here is a 1150-residue protein sequence, read N- to C-terminus: Fl(2)d-associated complex component (1150 aa).

Residues 1–10 (MEKKAKESLR) are compositionally biased toward basic and acidic residues. Disordered regions lie at residues 1-444 (MEKK…EEER), 477-710 (QGRE…PPPL), 833-914 (ASED…MDTN), and 1034-1053 (KEQG…AKIP). The segment covering 11-20 (RYKKAARHSA) has biased composition (basic residues). Positions 21 to 44 (THSSSSDSTSDSDSGSSSYSSTDS) are enriched in low complexity. A compositionally biased stretch (gly residues) spans 47 to 69 (GVGGVGVGVGVPGGAGGPGGSGS). The segment covering 72-97 (GHPHTHGHGHHPRSAERHHRKKKSSR) has biased composition (basic residues). Residues 98–107 (RGGSSSGDEP) are compositionally biased toward low complexity. Composition is skewed to basic residues over residues 110–144 (SRRK…KKRA) and 162–175 (AKLK…RLRA). The stretch at 122 to 147 (KKLVAKRNHIKRKLKEARLKKRAAAA) forms a coiled coil. Residues 176 to 199 (ASKEQRERDKLRVVQRDRERDHHR) are compositionally biased toward basic and acidic residues. The segment covering 202 to 215 (SSRSPPSSSTTTTT) has biased composition (low complexity). Residues 269–347 (PSLERERERE…KLRRQEEEEG (79 aa)) are a coiled coil. 3 stretches are compositionally biased toward basic and acidic residues: residues 270 to 414 (SLER…DEMR), 428 to 444 (YAPR…EEER), and 492 to 529 (PDER…PEWE). Gly residues predominate over residues 537-558 (AGGGPGGPSGTPGRPGGFVGGP). Basic and acidic residues-rich tracts occupy residues 589–611 (ERER…DRPD) and 630–640 (WLEHDQREKPR). The segment covering 660 to 669 (PPAPSHPHPA) has biased composition (pro residues). A compositionally biased stretch (basic and acidic residues) spans 693–702 (GHGDHGERPG). The span at 851–861 (QSLNLNQSLSS) shows a compositional bias: low complexity. A compositionally biased stretch (acidic residues) spans 879–889 (ELSEISDSDDD). Residues 890–903 (ILNKTDKVRPKNEL) show a composition bias toward basic and acidic residues. Over residues 905 to 914 (TETEQEMDTN) the composition is skewed to acidic residues.

Belongs to the ZC3H13 family. As to quaternary structure, component of the WMM complex, a N6-methyltransferase complex composed of a catalytic subcomplex, named MAC, and of an associated subcomplex, named MACOM. The MAC subcomplex is composed of Ime4/Mettl3 and Mettl14. The MACOM subcomplex is composed of fl(2)d, Flacc/Xio, Hakai, vir, and, in some cases of nito. Widely expressed during embryogenesis but shows enrichment in the neuroectoderm.

Its subcellular location is the nucleus. In terms of biological role, associated component of the WMM complex, a complex that mediates N6-methyladenosine (m6A) methylation of mRNAs, a modification that plays a role in the efficiency of mRNA splicing and is required for sex determination. In the WMM complex, acts as a key regulator of m6A methylation by bridging fl(2)d to the RNA-binding component nito. Required for sex determination and dosage compensation via Sxl alternative splicing: m6A methylation acts as a key regulator of Sxl pre-mRNA and promotes female-specific alternative splicing of Sxl, which determines female physiognomy. The protein is Fl(2)d-associated complex component of Drosophila melanogaster (Fruit fly).